The chain runs to 77 residues: Secapin (77 aa).

Positions 1–32 (MKNYSKNATHLITVLLFSFVVILLIIPSKCEA) are cleaved as a signal peptide. Residues 33–52 (VSNDMQPLEARSADLVPEPR) constitute a propeptide that is removed on maturation. Cys61 and Cys72 form a disulfide bridge.

The protein belongs to the secapin family. As to expression, expressed by the venom gland.

It is found in the secreted. In terms of biological role, serine protease inhibitor which exhibits antifibrinolytic, antielastolytic and antimicrobial activities. Displays antimicrobial activity against bacteria and fungi. Likely functions in the innate immune response to microbial infection and possibly in the venom, as an antifibrinolytic agent. Not toxic to mice but does induce slight sedation at higher doses (from 40 mg/kg). At a dose of 80 mg/kg, sedation occurs 15 minutes after injection and is accompanied by piloerection and hypothermia. This Apis mellifera (Honeybee) protein is Secapin.